Reading from the N-terminus, the 429-residue chain is 3-phosphoshikimate 1-carboxyvinyltransferase (429 aa).

The 3-phosphoshikimate site is built by Lys11, Ser12, and Arg16. Lys11 is a phosphoenolpyruvate binding site. 2 residues coordinate phosphoenolpyruvate: Gly82 and Arg110. The 3-phosphoshikimate site is built by Ser155, Gln157, Asp302, and Lys329. Gln157 provides a ligand contact to phosphoenolpyruvate. Asp302 functions as the Proton acceptor in the catalytic mechanism. Phosphoenolpyruvate contacts are provided by Arg333 and Arg385.

Belongs to the EPSP synthase family. Monomer.

It is found in the cytoplasm. The enzyme catalyses 3-phosphoshikimate + phosphoenolpyruvate = 5-O-(1-carboxyvinyl)-3-phosphoshikimate + phosphate. It participates in metabolic intermediate biosynthesis; chorismate biosynthesis; chorismate from D-erythrose 4-phosphate and phosphoenolpyruvate: step 6/7. Its function is as follows. Catalyzes the transfer of the enolpyruvyl moiety of phosphoenolpyruvate (PEP) to the 5-hydroxyl of shikimate-3-phosphate (S3P) to produce enolpyruvyl shikimate-3-phosphate and inorganic phosphate. The sequence is that of 3-phosphoshikimate 1-carboxyvinyltransferase from Helicobacter pylori (strain P12).